The chain runs to 485 residues: Signal recognition particle protein (485 aa).

GTP contacts are provided by residues 107 to 114 (GLQGAGKT), 189 to 193 (DTAGR), and 247 to 250 (TKLD). The tract at residues 452–485 (GFGGGAPAPQPGFRGYGPPKKQKKGSKKKKGFGL) is disordered. Positions 471–485 (KKQKKGSKKKKGFGL) are enriched in basic residues.

The protein belongs to the GTP-binding SRP family. SRP54 subfamily. In terms of assembly, part of the signal recognition particle protein translocation system, which is composed of SRP and FtsY.

The protein localises to the cytoplasm. It carries out the reaction GTP + H2O = GDP + phosphate + H(+). Its function is as follows. Involved in targeting and insertion of nascent membrane proteins into the cytoplasmic membrane. Binds to the hydrophobic signal sequence of the ribosome-nascent chain (RNC) as it emerges from the ribosomes. The SRP-RNC complex is then targeted to the cytoplasmic membrane where it interacts with the SRP receptor FtsY. In Synechococcus elongatus (strain ATCC 33912 / PCC 7942 / FACHB-805) (Anacystis nidulans R2), this protein is Signal recognition particle protein.